Consider the following 206-residue polypeptide: Protein Ta0236 (206 aa).

The AMMECR1 domain maps to 16–205 (DIGTKAVRLA…EKDPEGVVEK (190 aa)).

In Thermoplasma acidophilum (strain ATCC 25905 / DSM 1728 / JCM 9062 / NBRC 15155 / AMRC-C165), this protein is Protein Ta0236.